Reading from the N-terminus, the 417-residue chain is Gamma-glutamyl phosphate reductase (417 aa).

Belongs to the gamma-glutamyl phosphate reductase family.

It localises to the cytoplasm. The enzyme catalyses L-glutamate 5-semialdehyde + phosphate + NADP(+) = L-glutamyl 5-phosphate + NADPH + H(+). The protein operates within amino-acid biosynthesis; L-proline biosynthesis; L-glutamate 5-semialdehyde from L-glutamate: step 2/2. Functionally, catalyzes the NADPH-dependent reduction of L-glutamate 5-phosphate into L-glutamate 5-semialdehyde and phosphate. The product spontaneously undergoes cyclization to form 1-pyrroline-5-carboxylate. In Escherichia coli O81 (strain ED1a), this protein is Gamma-glutamyl phosphate reductase.